We begin with the raw amino-acid sequence, 294 residues long: Bifunctional protein FolD (294 aa).

NADP(+)-binding positions include Gly-166–Ser-168, Ser-191, and Ile-232.

The protein belongs to the tetrahydrofolate dehydrogenase/cyclohydrolase family. As to quaternary structure, homodimer.

It carries out the reaction (6R)-5,10-methylene-5,6,7,8-tetrahydrofolate + NADP(+) = (6R)-5,10-methenyltetrahydrofolate + NADPH. It catalyses the reaction (6R)-5,10-methenyltetrahydrofolate + H2O = (6R)-10-formyltetrahydrofolate + H(+). Its pathway is one-carbon metabolism; tetrahydrofolate interconversion. Catalyzes the oxidation of 5,10-methylenetetrahydrofolate to 5,10-methenyltetrahydrofolate and then the hydrolysis of 5,10-methenyltetrahydrofolate to 10-formyltetrahydrofolate. The sequence is that of Bifunctional protein FolD from Bradyrhizobium sp. (strain ORS 278).